We begin with the raw amino-acid sequence, 545 residues long: Phospholipase B-like 1 (545 aa).

Residues 1 to 35 (MSRHSQDERLGLPQPPALLPLLLLLLAVAVPLSQA) form the signal peptide. Asn68 is a glycosylation site (N-linked (GlcNAc...) (high mannose) asparagine; alternate). Asn68 carries an N-linked (GlcNAc...) (hybrid) asparagine; alternate glycan. The propeptide at 206–224 (LSPTKNSSLKFFKRWDMGH) is removed in mature form. N-linked (GlcNAc...) (high mannose) asparagine; alternate glycosylation is found at Asn305, Asn363, and Asn408. N-linked (GlcNAc...) (hybrid) asparagine; alternate glycosylation is found at Asn305, Asn363, and Asn408. 2 cysteine pairs are disulfide-bonded: Cys467–Cys472 and Cys471–Cys486. A glycan (N-linked (GlcNAc...) (high mannose) asparagine; alternate) is linked at Asn523. N-linked (GlcNAc...) (hybrid) asparagine; alternate glycosylation is present at Asn523.

Belongs to the phospholipase B-like family. In terms of assembly, may form a homodimer, each monomer is composed of a chain A and a chain B. Post-translationally, the maturation cleavages that produces chains A and B are required to open the putative substrate binding pocket. Both chains A and B remain associated in the mature protein.

Its subcellular location is the lysosome. Its function is as follows. Exhibits a weak phospholipase activity, acting on various phospholipids, including phosphatidylcholine, phosphatidylinositol, phosphatidylethanolamine and lysophospholipids. However, in view of the small size of the putative binding pocket, it has been proposed that it may act rather as an amidase or a peptidase. This chain is Phospholipase B-like 1 (PLBD1), found in Bos taurus (Bovine).